The sequence spans 60 residues: Metallothionein (60 aa).

The segment at 1-28 is beta; it reads MDCACATGGSCSCAGSCKCENCKCTSCK. A divalent metal cation is bound by residues Cys3, Cys5, Cys11, Cys13, Cys17, Cys19, Cys22, Cys24, Cys27, Cys31, Cys32, Cys34, Cys35, Cys39, Cys42, Cys46, Cys48, Cys56, Cys58, and Cys59. The tract at residues 29 to 60 is alpha; sequence KSCCSCCPSECEKCGQGCVCKGGSSEKCSCCN.

The protein belongs to the metallothionein superfamily. Type 1 family.

Metallothioneins have a high content of cysteine residues that bind various heavy metals. In Ambystoma mexicanum (Axolotl), this protein is Metallothionein (MT-A).